The sequence spans 157 residues: Cyclic pyranopterin monophosphate synthase (157 aa).

Substrate-binding positions include 74–76 (MCH) and 112–113 (ME). The active site involves D127.

This sequence belongs to the MoaC family. In terms of assembly, homohexamer; trimer of dimers.

The catalysed reaction is (8S)-3',8-cyclo-7,8-dihydroguanosine 5'-triphosphate = cyclic pyranopterin phosphate + diphosphate. The protein operates within cofactor biosynthesis; molybdopterin biosynthesis. Its function is as follows. Catalyzes the conversion of (8S)-3',8-cyclo-7,8-dihydroguanosine 5'-triphosphate to cyclic pyranopterin monophosphate (cPMP). This Campylobacter jejuni subsp. jejuni serotype O:6 (strain 81116 / NCTC 11828) protein is Cyclic pyranopterin monophosphate synthase.